We begin with the raw amino-acid sequence, 553 residues long: MEDDSLYLGGEWQFNHFSKLTSSRPDAAFAEIQRTSLPEKSPLSCETRVDLCDDLAPVARQLAPREKLPLSSRRPAAVGAGLQNMGNTCYVNASLQCLTYTPPLANYMLSREHSQTCHRHKGCMLCTMQAHITRALHNPGHVIQPSQALAAGFHRGKQEDAHEFLMFTVDAMKKACLPGHKQVDHHSKDTTLIHQIFGGYWRSQIKCLHCHGISDTFDPYLDIALDIQAAQSVQQALEQLVKPEELNGENAYHCGVCLQRAPASKTLTLHTSAKVLILVLKRFSDVTGNKIDKNVQYPECLDMKLYMSQTNSGPLVYVLYAVLVHAGWSCHNGHYFSYVKAQEGQWYKMDDAEVTASSITSVLSQQAYVLFYIQKSEWERHSESVSRGREPRALGAEDTDRRATQGELKRDHPCLQAPELDEHLVERATQESTLDHWKFLQEQNKTKPEFNVRKVEGTLPPDVLVIHQSKYKCGMKNHHPEQQSSLLNLSSTTPTHQESMNTGTLASLRGRARRSKGKNKHSKRALLVCQWSQWKYRPTRRGAHTHAHTQTHT.

The USP domain occupies 80-375; it reads AGLQNMGNTC…QAYVLFYIQK (296 aa). Cys-89 functions as the Nucleophile in the catalytic mechanism. His-334 acts as the Proton acceptor in catalysis. 2 stretches are compositionally biased toward basic and acidic residues: residues 382 to 392 and 398 to 413; these read SESVSRGREPR and DTDR…RDHP. 2 disordered regions span residues 382-413 and 491-524; these read SESV…RDHP and STTP…HSKR. A compositionally biased stretch (polar residues) spans 496-505; the sequence is HQESMNTGTL. The span at 510 to 524 shows a compositional bias: basic residues; it reads GRARRSKGKNKHSKR.

This sequence belongs to the peptidase C19 family. USP17 subfamily.

It localises to the nucleus. The protein resides in the endoplasmic reticulum. The catalysed reaction is Thiol-dependent hydrolysis of ester, thioester, amide, peptide and isopeptide bonds formed by the C-terminal Gly of ubiquitin (a 76-residue protein attached to proteins as an intracellular targeting signal).. Its function is as follows. Deubiquitinating enzyme that removes conjugated ubiquitin from specific proteins to regulate different cellular processes that may include cell proliferation, progression through the cell cycle, apoptosis, cell migration, and the cellular response to viral infection. The sequence is that of Ubiquitin carboxyl-terminal hydrolase 17-like protein 15 (USP17L15) from Homo sapiens (Human).